We begin with the raw amino-acid sequence, 1720 residues long: 182 kDa tankyrase-1-binding protein (1720 aa).

Positions 1–137 (MKGSTLREGT…PPLTPPARCA (137 aa)) are disordered. The residue at position 14 (Ser-14) is a Phosphoserine. The segment covering 117–127 (SGKEDAGKEDL) has biased composition (basic and acidic residues). Thr-131 is subject to Phosphothreonine. Phosphoserine is present on residues Ser-178 and Ser-220. Disordered stretches follow at residues 185-472 (SRLT…ESNW) and 485-595 (RPSG…EDQE). Positions 209–1563 (EEDSKSPAKG…TEILDSAMYR (1355 aa)) are acidic. Positions 232–243 (QEEHSKTPEERN) are enriched in basic and acidic residues. Thr-238 carries the phosphothreonine modification. Positions 266–287 (VSKTWVTSSADPVSEHGGSTSA) are enriched in polar residues. Phosphoserine occurs at positions 286 and 300. Residues 296–316 (PASESPRLSSRPSSPCHSQLS) show a composition bias toward low complexity. Residues 317–327 (ETQSPAASEAS) are compositionally biased toward polar residues. A phosphoserine mark is found at Ser-429 and Ser-437. The segment covering 449–459 (TLPQGQGSQSA) has biased composition (polar residues). Phosphoserine is present on residues Ser-496 and Ser-500. Over residues 502–518 (ITEASEAAEAAEADSWA) the composition is skewed to low complexity. Thr-503 and Thr-533 each carry phosphothreonine. A phosphoserine mark is found at Ser-539, Ser-568, Ser-602, Ser-673, Ser-692, and Ser-713. Disordered regions lie at residues 659-720 (TTLP…CSEG), 734-924 (GVAT…EFEK), and 955-1081 (SGGG…GWAG). The span at 742–758 (SSFGSSSWSQDTSQNYS) shows a compositional bias: low complexity. A phosphoserine mark is found at Ser-763, Ser-796, Ser-807, Ser-845, Ser-866, Ser-871, Ser-876, Ser-887, Ser-912, Ser-976, Ser-980, Ser-1006, Ser-1017, and Ser-1022. Residues 840-866 (FGKRESQDPHSIHDKELQDQEFGKRDS) are compositionally biased toward basic and acidic residues. Residues 991–1014 (FEKKTPVGEDRFCEASRDVGHLEE) are compositionally biased toward basic and acidic residues. The span at 1027-1039 (HSRDGAARPKDEG) shows a compositional bias: basic and acidic residues. Phosphoserine is present on residues Ser-1047, Ser-1063, Ser-1084, Ser-1096, Ser-1126, Ser-1131, Ser-1171, Ser-1212, Ser-1241, and Ser-1246. Positions 1128–1153 (AGLSPSRKSGGGHFVPPGETKAGAVD) are disordered. Residues 1198 to 1255 (LARRLGTGESEEPRSLGVGEKDWTSSVEARNRDLPGQAEVGRHSQARESGVGEPDWSG) form a disordered region. Residues 1208–1230 (EEPRSLGVGEKDWTSSVEARNRD) are compositionally biased toward basic and acidic residues. Position 1275 is a phosphothreonine (Thr-1275). Ser-1290, Ser-1321, Ser-1324, Ser-1373, and Ser-1375 each carry phosphoserine. The tract at residues 1358–1546 (GRVGPDLELD…RGLLPSCPSE (189 aa)) is disordered. Positions 1402-1411 (EDSSSPSFET) are enriched in polar residues. Residues Ser-1425, Ser-1429, Ser-1437, Ser-1440, Ser-1442, Ser-1463, and Ser-1466 each carry the phosphoserine modification. The segment covering 1428–1457 (ASPSSCLTRSPPSGSQSLLEGIMTASSSKG) has biased composition (polar residues). The tankyrase-binding stretch occupies residues 1440 to 1532 (SGSQSLLEGI…QNEQASAPPP (93 aa)). Residues 1477–1489 (LAAGAGQGEPQEP) are compositionally biased toward low complexity. Phosphoserine is present on Ser-1496. The span at 1515 to 1527 (WSLTGAARQNEQA) shows a compositional bias: polar residues. A Phosphoserine modification is found at Ser-1549. Position 1554 is a phosphothreonine (Thr-1554). The tract at residues 1567 to 1720 (NLGRKRGHRA…QALKLKKKKI (154 aa)) is disordered. Residues 1568-1577 (LGRKRGHRAP) are compositionally biased toward basic residues. Over residues 1593 to 1606 (SDTRLFQDSTEPRA) the composition is skewed to basic and acidic residues. Ser-1611, Ser-1612, and Ser-1622 each carry phosphoserine. Residues 1620–1626 (PQSRRTR) carry the Nuclear localization signal motif. N6-methyllysine is present on Lys-1635. Ser-1643 and Ser-1657 each carry phosphoserine. Residues 1656-1670 (RSAEEGEVTESKSSQ) are compositionally biased toward basic and acidic residues. The segment covering 1671 to 1690 (KESSVQRSKSCKVPGLGKPL) has biased composition (low complexity). Ser-1706 carries the phosphoserine modification. Residues 1714–1719 (KLKKKK) carry the Nuclear localization signal motif.

Binds to the ANK repeat domain of TNKS1 and TNKS2. ADP-ribosylated by TNKS1.

The protein resides in the nucleus. Its subcellular location is the cytoplasm. The protein localises to the cytoskeleton. It is found in the chromosome. The sequence is that of 182 kDa tankyrase-1-binding protein (Tnks1bp1) from Mus musculus (Mouse).